The chain runs to 68 residues: SERF-like protein YDL085C-A (68 aa).

Basic and acidic residues-rich tracts occupy residues 1 to 43 and 50 to 68; these read MARG…EILR and DARR…KTRR. The tract at residues 1–68 is disordered; the sequence is MARGNQRDLA…EKLKAEKTRR (68 aa). Serine 37 carries the phosphoserine modification.

The protein belongs to the SERF family.

Its subcellular location is the cytoplasm. The protein resides in the nucleus. In Saccharomyces cerevisiae (strain ATCC 204508 / S288c) (Baker's yeast), this protein is SERF-like protein YDL085C-A.